Reading from the N-terminus, the 44-residue chain is Protein PsbN (44 aa).

The helical transmembrane segment at 6–26 (FFFTFFLWFLLLSVTGYSVYV) threads the bilayer.

It belongs to the PsbN family.

The protein localises to the plastid. The protein resides in the chloroplast thylakoid membrane. Its function is as follows. May play a role in photosystem I and II biogenesis. The chain is Protein PsbN from Chlamydomonas reinhardtii (Chlamydomonas smithii).